The primary structure comprises 219 residues: 2-C-methyl-D-erythritol 4-phosphate cytidylyltransferase (219 aa).

The protein belongs to the IspD/TarI cytidylyltransferase family. IspD subfamily.

It catalyses the reaction 2-C-methyl-D-erythritol 4-phosphate + CTP + H(+) = 4-CDP-2-C-methyl-D-erythritol + diphosphate. It participates in isoprenoid biosynthesis; isopentenyl diphosphate biosynthesis via DXP pathway; isopentenyl diphosphate from 1-deoxy-D-xylulose 5-phosphate: step 2/6. Functionally, catalyzes the formation of 4-diphosphocytidyl-2-C-methyl-D-erythritol from CTP and 2-C-methyl-D-erythritol 4-phosphate (MEP). This is 2-C-methyl-D-erythritol 4-phosphate cytidylyltransferase from Chlamydia trachomatis serovar L2 (strain ATCC VR-902B / DSM 19102 / 434/Bu).